Here is a 116-residue protein sequence, read N- to C-terminus: Putative iron-sulfur cluster insertion protein ErpA (116 aa).

Positions 44, 108, and 110 each coordinate iron-sulfur cluster.

This sequence belongs to the HesB/IscA family. In terms of assembly, homodimer. It depends on iron-sulfur cluster as a cofactor.

Required for insertion of 4Fe-4S clusters. This is Putative iron-sulfur cluster insertion protein ErpA from Janthinobacterium sp. (strain Marseille) (Minibacterium massiliensis).